The chain runs to 321 residues: MYSLLTALSVPLLAGLAHGYANPGSCSGSCNVHDPALIVRESDGKYFRFSTGNEISYASASSINGPWTAIGSVVPAGSKIDLSGNTDLWAPDLSYVDGTYYCLYSVSTFGSQDSAIGVASSTTMELNTWTDHGSVGVASSSSKNYNAIDGNLLVDGSSYYLQFGSFWGDIYQVKMASPLKTAGSASYNIAYNATGTHSEEGSYLFKYGSYYYLFFSSGTCCGYDTSRPAQGEEYKIMVCRSTSATGGFVDKNGNACTESGGTIVLASHGTVYGPGGQGVYDDPTYGPVLYYHYVDTTIGYADDQKLFGWNTIDFSSGWPVV.

An N-terminal signal peptide occupies residues 1 to 19; that stretch reads MYSLLTALSVPLLAGLAHG. Aspartate 34 functions as the Proton acceptor in the catalytic mechanism. The N-linked (GlcNAc...) asparagine glycan is linked to asparagine 192. The active-site Proton donor is the glutamate 200.

It belongs to the glycosyl hydrolase 43 family.

The protein localises to the secreted. It carries out the reaction Endohydrolysis of (1-&gt;5)-alpha-arabinofuranosidic linkages in (1-&gt;5)-arabinans.. It participates in glycan metabolism; L-arabinan degradation. In terms of biological role, endo-1,5-alpha-L-arabinanase involved in degradation of pectin. Its preferred substrate is linear 1,5-alpha-L-arabinan. In Aspergillus aculeatus, this protein is Arabinan endo-1,5-alpha-L-arabinosidase A (abnA).